A 524-amino-acid chain; its full sequence is Lysophospholipid acyltransferase LPCAT4 (524 aa).

The next 2 helical transmembrane spans lie at 40-62 (CLLGVLLAPIRVLLAFIVLFLLW) and 87-107 (TVCHNGVLGLSRLLFFLLGFL). The HXXXXD motif motif lies at 129-134 (HSTFFD). Asn-152 carries N-linked (GlcNAc...) asparagine glycosylation. A disordered region spans residues 490–524 (PHKPRSTSQIPNASSPSSPTALANGTVQAPKQKGD). Residues 495 to 518 (STSQIPNASSPSSPTALANGTVQA) are compositionally biased toward polar residues.

This sequence belongs to the 1-acyl-sn-glycerol-3-phosphate acyltransferase family. Widely expressed with much higher level in brain. Expressed in erythroleukemic cells but not in reticulocytes.

The protein resides in the endoplasmic reticulum membrane. The enzyme catalyses a 1-acyl-sn-glycero-3-phosphoethanolamine + an acyl-CoA = a 1,2-diacyl-sn-glycero-3-phosphoethanolamine + CoA. It catalyses the reaction a 1-O-(1Z-alkenyl)-sn-glycero-3-phosphoethanolamine + an acyl-CoA = a 1-O-(1Z-alkenyl)-2-acyl-sn-glycero-3-phosphoethanolamine + CoA. It carries out the reaction a 1-acyl-sn-glycero-3-phosphocholine + an acyl-CoA = a 1,2-diacyl-sn-glycero-3-phosphocholine + CoA. The catalysed reaction is a 1-O-alkyl-sn-glycero-3-phosphocholine + acetyl-CoA = a 1-O-alkyl-2-acetyl-sn-glycero-3-phosphocholine + CoA. The enzyme catalyses a 1-acyl-sn-glycero-3-phospho-L-serine + an acyl-CoA = a 1,2-diacyl-sn-glycero-3-phospho-L-serine + CoA. It catalyses the reaction octanoyl-CoA + a 1-acyl-sn-glycero-3-phosphoethanolamine = 1-acyl-2-octanoyl-sn-glycero-3-phosphoethanolamine + CoA. It carries out the reaction a 1-acyl-sn-glycero-3-phosphoethanolamine + hexadecanoyl-CoA = 1-acyl-2-hexadecanoyl-sn-glycero-3-phosphoethanolamine + CoA. The catalysed reaction is a 1-acyl-sn-glycero-3-phosphoethanolamine + octadecanoyl-CoA = 1-acyl-2-octadecanoyl-sn-glycero-3-phosphoethanolamine + CoA. The enzyme catalyses a 1-acyl-sn-glycero-3-phosphoethanolamine + (9Z)-octadecenoyl-CoA = 1-acyl-2-(9Z)-octadecenoyl-sn-glycero-3-phosphoethanolamine + CoA. It catalyses the reaction a 1-acyl-sn-glycero-3-phosphoethanolamine + (5Z,8Z,11Z,14Z)-eicosatetraenoyl-CoA = 1-acyl-2-(5Z,8Z,11Z,14Z)-eicosatetraenoyl-sn-glycero-3-phosphoethanolamine + CoA. It carries out the reaction a 1-O-(1Z-alkenyl)-sn-glycero-3-phosphoethanolamine + octanoyl-CoA = 1-O-(1Z)-alkenyl-2-octanoyl-sn-glycero-3-phosphoethanolamine + CoA. The catalysed reaction is a 1-O-(1Z-alkenyl)-sn-glycero-3-phosphoethanolamine + hexadecanoyl-CoA = 1-O-(1Z)-alkenyl-2-hexadecanoyl-sn-glycero-3-phosphoethanolamine + CoA. The enzyme catalyses a 1-O-(1Z-alkenyl)-sn-glycero-3-phosphoethanolamine + octadecanoyl-CoA = 1-O-(1Z)-alkenyl-2-octadecanoyl-sn-glycero-3-phosphoethanolamine + CoA. It catalyses the reaction a 1-O-(1Z-alkenyl)-sn-glycero-3-phosphoethanolamine + (9Z)-octadecenoyl-CoA = 1-O-(1Z)-alkenyl-2-(9Z)-octadecenoyl-sn-glycero-3-phosphoethanolamine + CoA. It carries out the reaction a 1-O-(1Z-alkenyl)-sn-glycero-3-phosphoethanolamine + (5Z,8Z,11Z,14Z)-eicosatetraenoyl-CoA = 1-O-(1Z)-alkenyl-2-(5Z,8Z,11Z,14Z)-eicosatetraenoyl-sn-glycero-3-phosphoethanolamine + CoA. The catalysed reaction is a 1-acyl-sn-glycero-3-phosphocholine + hexadecanoyl-CoA = 1-acyl-2-hexadecanoyl-sn-glycero-3-phosphocholine + CoA. The enzyme catalyses a 1-acyl-sn-glycero-3-phosphocholine + (9Z)-octadecenoyl-CoA = a 1-acyl-2-(9Z)-octadecenoyl-sn-glycero-3-phosphocholine + CoA. It catalyses the reaction 1-O-hexadecyl-sn-glycero-3-phosphocholine + (9Z)-octadecenoyl-CoA = 1-O-hexadecyl-2-(9Z)-octadecenoyl-sn-glycero-3-phosphocholine + CoA. It carries out the reaction 1-O-hexadecyl-sn-glycero-3-phosphocholine + (5Z,8Z,11Z,14Z)-eicosatetraenoyl-CoA = 1-O-hexadecyl-2-(5Z,8Z,11Z,14Z)-eicosatetraenoyl-sn-glycero-3-phosphocholine + CoA. The catalysed reaction is 1-hexadecanoyl-sn-glycero-3-phospho-L-serine + (9Z)-octadecenoyl-CoA = 1-hexadecanoyl-2-(9Z-octadecenoyl)-sn-glycero-3-phospho-L-serine + CoA. The enzyme catalyses 1-octadecanoyl-sn-glycero-3-phospho-(1'-sn-glycerol) + (9Z)-octadecenoyl-CoA = 1-octadecanoyl-2-(9Z-octadecenoyl)-sn-glycero-3-phospho-(1'-sn-glycerol) + CoA. It catalyses the reaction 1-octadecanoyl-sn-glycero-3-phospho-(1'-sn-glycerol) + (5Z,8Z,11Z,14Z)-eicosatetraenoyl-CoA = 1-octadecanoyl-2-(5Z,8Z,11Z,14Z-eicosatetraenoyl)-sn-glycero-3-phospho-(1'-sn-glycerol) + CoA. The protein operates within lipid metabolism; phospholipid metabolism. In terms of biological role, displays acyl-CoA-dependent lysophospholipid acyltransferase activity with a subset of lysophospholipids as substrates; converts lysophosphatidylethanolamine to phosphatidylethanolamine, 1-alkenyl-lysophatidylethanolamine to 1-alkenyl-phosphatidylethanolamine, lysophosphatidylglycerol and alkyl-lysophosphatidylcholine to phosphatidylglycerol and alkyl-phosphatidylcholine, respectively. In contrast, has no lysophosphatidylinositol, glycerol-3-phosphate, diacylglycerol or lysophosphatidic acid acyltransferase activity. Prefers long chain acyl-CoAs (C16, C18) as acyl donors. Converts lysophosphatidylcholine to phosphatidycholine. This is Lysophospholipid acyltransferase LPCAT4 (Lpcat4) from Mus musculus (Mouse).